Here is a 681-residue protein sequence, read N- to C-terminus: PWWP domain-containing DNA repair factor 3B (681 aa).

Residues 102–121 (NLSQESMSEEQPTATASENV) are compositionally biased toward polar residues. Disordered regions lie at residues 102 to 144 (NLSQ…TQED), 166 to 200 (HTTG…DDKK), and 285 to 304 (QNQS…AGCS). Ser128 is subject to Phosphoserine. The span at 285–302 (QNQSSVESDVGAETSTAG) shows a compositional bias: polar residues. A PWWP domain is found at 377 to 438 (TGMIVWFKYQ…KKYDCKEKQA (62 aa)).

It belongs to the PWWP3A family.

This Mus musculus (Mouse) protein is PWWP domain-containing DNA repair factor 3B (Pwwp3b).